We begin with the raw amino-acid sequence, 527 residues long: Putative BTB/POZ domain-containing protein R225 (527 aa).

In terms of domain architecture, BTB spans 16–89; that stretch reads TDLELVLTDP…YGQTNRSTDY (74 aa).

The protein belongs to the mimivirus BTB/WD family.

This Acanthamoeba polyphaga (Amoeba) protein is Putative BTB/POZ domain-containing protein R225.